The chain runs to 663 residues: Rho GTPase-activating protein 18 (663 aa).

Disordered stretches follow at residues 14–73 (AYHP…DESM) and 85–106 (RSNENRQEGQEAIVVKEPDEGE). A compositionally biased stretch (basic and acidic residues) spans 27–37 (SHVKGGDEATS). The segment covering 38–51 (SRRYGQYTINQEGS) has biased composition (polar residues). Serine 65 and serine 68 each carry phosphoserine. A compositionally biased stretch (basic and acidic residues) spans 85 to 102 (RSNENRQEGQEAIVVKEP). A Phosphothreonine modification is found at threonine 156. 2 disordered regions span residues 173-228 (FAQQ…PASE) and 245-277 (KEFSKERTQKISSNDSLPSFRLPKDKTGTTRIG). Composition is skewed to basic and acidic residues over residues 178 to 205 (EAQEKPPDDSDLRSVRTNENKGQGKDDQ) and 212 to 222 (DSKEQISRVPE). Serine 260 and serine 263 each carry phosphoserine. Residues 324–523 (IPLTILLEQD…LLIRYQKILW (200 aa)) form the Rho-GAP domain. Position 610 is a phosphoserine (serine 610).

Interacts with MPHOSPH6. In terms of tissue distribution, widely expressed: expressed in most organs, except small intestine.

The protein resides in the cytoplasm. Its function is as follows. Rho GTPase activating protein that suppresses F-actin polymerization by inhibiting Rho. Rho GTPase activating proteins act by converting Rho-type GTPases to an inactive GDP-bound state. Plays a key role in tissue tension and 3D tissue shape by regulating cortical actomyosin network formation. Acts downstream of YAP1 and inhibits actin polymerization, which in turn reduces nuclear localization of YAP1. Regulates cell shape, spreading, and migration. The polypeptide is Rho GTPase-activating protein 18 (Mus musculus (Mouse)).